The primary structure comprises 239 residues: Orotidine 5'-phosphate decarboxylase (239 aa).

Substrate-binding positions include D15, K37, 64 to 73, T126, R187, Q196, G216, and R217; that span reads DLKFHDIPNT. The active-site Proton donor is the K66.

It belongs to the OMP decarboxylase family. Type 1 subfamily. As to quaternary structure, homodimer.

It carries out the reaction orotidine 5'-phosphate + H(+) = UMP + CO2. It functions in the pathway pyrimidine metabolism; UMP biosynthesis via de novo pathway; UMP from orotate: step 2/2. Its function is as follows. Catalyzes the decarboxylation of orotidine 5'-monophosphate (OMP) to uridine 5'-monophosphate (UMP). In Geobacter sulfurreducens (strain ATCC 51573 / DSM 12127 / PCA), this protein is Orotidine 5'-phosphate decarboxylase.